We begin with the raw amino-acid sequence, 142 residues long: Hemoglobin subunit zeta (142 aa).

Position 2 is an N-acetylserine (serine 2). Positions 2 to 142 (SLTRTERTII…VSGVLTEKYR (141 aa)) constitute a Globin domain. The residue at position 29 (threonine 29) is a Phosphothreonine. Serine 53 is modified (phosphoserine). Residue histidine 59 participates in heme b binding. Serine 73 and serine 82 each carry phosphoserine. A heme b-binding site is contributed by histidine 88.

Belongs to the globin family. Heterotetramer of two zeta chains and beta-type chains.

Its function is as follows. The zeta chain is an alpha-type chain of mammalian embryonic hemoglobin. In Capra hircus (Goat), this protein is Hemoglobin subunit zeta (HBZ1).